We begin with the raw amino-acid sequence, 486 residues long: Maternal protein exuperantia (486 aa).

Disordered stretches follow at residues 202–233 (NARV…RDEF) and 386–477 (STIR…ISLP). Residues 218-233 (ADKHVKNGLQKERDEF) show a composition bias toward basic and acidic residues. Basic residues predominate over residues 387–397 (TIRRRNKRNTP). 2 stretches are compositionally biased toward polar residues: residues 420 to 437 (KSQS…TPSP) and 464 to 476 (SALN…SISL).

In terms of biological role, ensures the proper localization of the mRNA of the bicoid gene to the anterior regions of the oocyte thus playing a fundamental role in the establishment of the polarity of the oocyte. May bind the bcd mRNA. The sequence is that of Maternal protein exuperantia (exu) from Drosophila virilis (Fruit fly).